The chain runs to 587 residues: Putative phagocytic receptor 1b (587 aa).

Residues 1-23 (MRLQILLIYLICIIVSSIVLVES) form the signal peptide. 9 helical membrane-spanning segments follow: residues 223–243 (LSVM…AIMI), 294–314 (IGWQ…FGMF), 319–339 (GGNM…ISGY), 354–374 (AWNI…VVIL), 390–410 (ILTM…LTVV), 448–468 (ILIA…YIFN), 480–500 (GILC…TVAL), 524–544 (VVFI…MYGL), and 556–576 (IVCF…SLIF).

Belongs to the nonaspanin (TM9SF) (TC 9.A.2) family.

The protein localises to the membrane. Involved in adhesion and phagocytosis of hydrophilic particles. This is Putative phagocytic receptor 1b (phg1b) from Dictyostelium discoideum (Social amoeba).